Reading from the N-terminus, the 216-residue chain is Sporamin B (216 aa).

The N-terminal stretch at 1 to 21 is a signal peptide; sequence MKALALLFVLSLYLLPNPAHS.

The protein belongs to the protease inhibitor I3 (leguminous Kunitz-type inhibitor) family. In terms of tissue distribution, accumulates specifically in tuberous roots and tubers upon tuberization. Sporamin accounts 60 to 80% of the total soluble protein of the organ.

It localises to the vacuole. Major tuberous root protein. This is Sporamin B (GSPO-B1) from Ipomoea batatas (Sweet potato).